The following is a 363-amino-acid chain: MSGNTYGKLFTVTTAGESHGPALVAIVDGCPPGLELSARDLQRDLDRRKPGTSRHTTQRQEADEVEILSGVFEGKTTGTPIGLLIRNTDQKSKDYSAIKDLFRPAHADYTYHHKYGVRDYRGGGRSSARETAMRVAAGAIAKKYLAGLGIQVRGYMSQLGPIEIPFRSWDSVEQNAFFSPDPDKVPELEAYMDQLRRDQDSVGAKITVVAEGVPPGLGEPIFDRLDAELAHALMSINAVKGVEIGAGFASIAQRGTEHRDELTPQGFLSNNAGGILGGISSGQPIVAHLALKPTSSITTPGRSIDTAGEPVDMITKGRHDPCVGIRATPIAEAMMAIVLLDQLLRQRGQNADVRVDTPVLPQL.

The segment at 42–61 is disordered; sequence QRDLDRRKPGTSRHTTQRQE. NADP(+) is bound by residues R48 and R54. FMN-binding positions include 125–127, 237–238, G277, 292–296, and R318; these read RSS, NA, and KPTSS.

This sequence belongs to the chorismate synthase family. As to quaternary structure, homotetramer. The cofactor is FMNH2.

It catalyses the reaction 5-O-(1-carboxyvinyl)-3-phosphoshikimate = chorismate + phosphate. It functions in the pathway metabolic intermediate biosynthesis; chorismate biosynthesis; chorismate from D-erythrose 4-phosphate and phosphoenolpyruvate: step 7/7. Functionally, catalyzes the anti-1,4-elimination of the C-3 phosphate and the C-6 proR hydrogen from 5-enolpyruvylshikimate-3-phosphate (EPSP) to yield chorismate, which is the branch point compound that serves as the starting substrate for the three terminal pathways of aromatic amino acid biosynthesis. This reaction introduces a second double bond into the aromatic ring system. This chain is Chorismate synthase, found in Pseudomonas aeruginosa (strain LESB58).